Reading from the N-terminus, the 256-residue chain is Phosphonates import ATP-binding protein PhnC (256 aa).

The ABC transporter domain occupies 5–253 (LRITGLVKEY…MLKTIYGGES (249 aa)). 38-45 (GPSGTGKS) contributes to the ATP binding site.

This sequence belongs to the ABC transporter superfamily. Phosphonates importer (TC 3.A.1.9.1) family. As to quaternary structure, the complex is composed of two ATP-binding proteins (PhnC), two transmembrane proteins (PhnE) and a solute-binding protein (PhnD).

Its subcellular location is the cell inner membrane. The enzyme catalyses phosphonate(out) + ATP + H2O = phosphonate(in) + ADP + phosphate + H(+). Part of the ABC transporter complex PhnCDE involved in phosphonates import. Responsible for energy coupling to the transport system. The polypeptide is Phosphonates import ATP-binding protein PhnC (Bordetella parapertussis (strain 12822 / ATCC BAA-587 / NCTC 13253)).